We begin with the raw amino-acid sequence, 155 residues long: U4/U6.U5 small nuclear ribonucleoprotein 27 kDa protein (155 aa).

2 stretches are compositionally biased toward basic residues: residues 1 to 31 (MGRS…RERS) and 39 to 59 (RRSR…RHRS). The interval 1-97 (MGRSRSRSPR…ITEEDLEGKT (97 aa)) is disordered. Phosphoserine occurs at positions 61 and 65. The span at 66-97 (RLKERRDEEKKETKETKSKERQITEEDLEGKT) shows a compositional bias: basic and acidic residues. A phosphoserine mark is found at Ser111, Ser114, and Ser132.

Belongs to the SNUT3 family. Part of a tri-snRNP complex. Phosphorylated in vitro by snRNP-associated protein kinase.

It localises to the nucleus. Its function is as follows. May play a role in mRNA splicing. This is U4/U6.U5 small nuclear ribonucleoprotein 27 kDa protein (SNRNP27) from Homo sapiens (Human).